Here is a 75-residue protein sequence, read N- to C-terminus: Alpha-amylase inhibitor Paim-2 (75 aa).

2 disulfide bridges follow: C10/C26 and C44/C72.

Its function is as follows. Inhibits mammalian alpha-amylases specifically but has no action on plant and microbial alpha-amylases. In Streptomyces olivaceoviridis (Streptomyces corchorusii), this protein is Alpha-amylase inhibitor Paim-2.